We begin with the raw amino-acid sequence, 218 residues long: Thiopurine S-methyltransferase (218 aa).

Residues W10, L45, E66, and R123 each coordinate S-adenosyl-L-methionine.

This sequence belongs to the class I-like SAM-binding methyltransferase superfamily. TPMT family.

It is found in the cytoplasm. It carries out the reaction S-adenosyl-L-methionine + a thiopurine = S-adenosyl-L-homocysteine + a thiopurine S-methylether.. The sequence is that of Thiopurine S-methyltransferase from Shewanella baltica (strain OS185).